The primary structure comprises 102 residues: MTIGLAHYLAVAAILFTIGVFGIFVNRKNIIVILMSIELILLAVNINLVAFSVYLGDVVGQIFAMFVLTVAAAEAAVGLAILVTFFRNRGDISVDDASMMKG.

3 helical membrane-spanning segments follow: residues 5 to 25, 30 to 50, and 62 to 82; these read LAHYLAVAAILFTIGVFGIFV, IIVILMSIELILLAVNINLVA, and IFAMFVLTVAAAEAAVGLAIL.

Belongs to the complex I subunit 4L family. NDH-1 is composed of 14 different subunits. Subunits NuoA, H, J, K, L, M, N constitute the membrane sector of the complex.

The protein resides in the cell inner membrane. It catalyses the reaction a quinone + NADH + 5 H(+)(in) = a quinol + NAD(+) + 4 H(+)(out). Functionally, NDH-1 shuttles electrons from NADH, via FMN and iron-sulfur (Fe-S) centers, to quinones in the respiratory chain. The immediate electron acceptor for the enzyme in this species is believed to be ubiquinone. Couples the redox reaction to proton translocation (for every two electrons transferred, four hydrogen ions are translocated across the cytoplasmic membrane), and thus conserves the redox energy in a proton gradient. This is NADH-quinone oxidoreductase subunit K from Phenylobacterium zucineum (strain HLK1).